Consider the following 617-residue polypeptide: Dihydroxy-acid dehydratase (617 aa).

D81 is a Mg(2+) binding site. C122 provides a ligand contact to [2Fe-2S] cluster. 2 residues coordinate Mg(2+): D123 and K124. The residue at position 124 (K124) is an N6-carboxylysine. C197 lines the [2Fe-2S] cluster pocket. A Mg(2+)-binding site is contributed by E494. Catalysis depends on S520, which acts as the Proton acceptor.

It belongs to the IlvD/Edd family. As to quaternary structure, homodimer. Requires [2Fe-2S] cluster as cofactor. The cofactor is Mg(2+).

It catalyses the reaction (2R)-2,3-dihydroxy-3-methylbutanoate = 3-methyl-2-oxobutanoate + H2O. It carries out the reaction (2R,3R)-2,3-dihydroxy-3-methylpentanoate = (S)-3-methyl-2-oxopentanoate + H2O. It participates in amino-acid biosynthesis; L-isoleucine biosynthesis; L-isoleucine from 2-oxobutanoate: step 3/4. The protein operates within amino-acid biosynthesis; L-valine biosynthesis; L-valine from pyruvate: step 3/4. Its function is as follows. Functions in the biosynthesis of branched-chain amino acids. Catalyzes the dehydration of (2R,3R)-2,3-dihydroxy-3-methylpentanoate (2,3-dihydroxy-3-methylvalerate) into 2-oxo-3-methylpentanoate (2-oxo-3-methylvalerate) and of (2R)-2,3-dihydroxy-3-methylbutanoate (2,3-dihydroxyisovalerate) into 2-oxo-3-methylbutanoate (2-oxoisovalerate), the penultimate precursor to L-isoleucine and L-valine, respectively. The sequence is that of Dihydroxy-acid dehydratase from Frankia casuarinae (strain DSM 45818 / CECT 9043 / HFP020203 / CcI3).